A 497-amino-acid polypeptide reads, in one-letter code: Replication factor C large subunit (497 aa).

50 to 57 (GPAGVGKT) is an ATP binding site. Residues 428–455 (KRRSLGRDEGKAFFEKKPKKQTPDKKQM) are compositionally biased toward basic and acidic residues. Residues 428-497 (KRRSLGRDEG…AKPQKTLFDF (70 aa)) are disordered. Over residues 456 to 465 (DLTQIINSTP) the composition is skewed to polar residues. The segment covering 466–476 (QEDKVEKKETE) has biased composition (basic and acidic residues).

The protein belongs to the activator 1 small subunits family. RfcL subfamily. Heteromultimer composed of small subunits (RfcS) and large subunits (RfcL).

Functionally, part of the RFC clamp loader complex which loads the PCNA sliding clamp onto DNA. The sequence is that of Replication factor C large subunit from Methanococcoides burtonii (strain DSM 6242 / NBRC 107633 / OCM 468 / ACE-M).